A 247-amino-acid polypeptide reads, in one-letter code: Triosephosphate isomerase (247 aa).

8–10 (NWK) provides a ligand contact to substrate. H94 serves as the catalytic Electrophile. The Proton acceptor role is filled by E165. Residues G171 and S210 each coordinate substrate.

Belongs to the triosephosphate isomerase family. In terms of assembly, homodimer.

The protein resides in the cytoplasm. The catalysed reaction is D-glyceraldehyde 3-phosphate = dihydroxyacetone phosphate. It participates in carbohydrate biosynthesis; gluconeogenesis. The protein operates within carbohydrate degradation; glycolysis; D-glyceraldehyde 3-phosphate from glycerone phosphate: step 1/1. In terms of biological role, involved in the gluconeogenesis. Catalyzes stereospecifically the conversion of dihydroxyacetone phosphate (DHAP) to D-glyceraldehyde-3-phosphate (G3P). The sequence is that of Triosephosphate isomerase from Aquifex aeolicus (strain VF5).